A 151-amino-acid polypeptide reads, in one-letter code: Deoxyuridine 5'-triphosphate nucleotidohydrolase (151 aa).

Substrate-binding positions include R70 to G72, N83, L87 to D89, and M97.

The protein belongs to the dUTPase family. Requires Mg(2+) as cofactor.

It carries out the reaction dUTP + H2O = dUMP + diphosphate + H(+). Its pathway is pyrimidine metabolism; dUMP biosynthesis; dUMP from dCTP (dUTP route): step 2/2. Functionally, this enzyme is involved in nucleotide metabolism: it produces dUMP, the immediate precursor of thymidine nucleotides and it decreases the intracellular concentration of dUTP so that uracil cannot be incorporated into DNA. The chain is Deoxyuridine 5'-triphosphate nucleotidohydrolase from Pseudomonas aeruginosa (strain UCBPP-PA14).